The sequence spans 926 residues: Alpha-aminoadipic semialdehyde synthase, mitochondrial (926 aa).

The transit peptide at 1 to 27 (MLRAQRLRLARLRACVSRGLHHKPVMA) directs the protein to the mitochondrion. The lysine-ketoglutarate reductase stretch occupies residues 28–455 (LRREDVNAWE…DAVITSNGLL (428 aa)). An N6-acetyllysine mark is found at lysine 48, lysine 52, and lysine 56. N6-acetyllysine; alternate is present on lysine 93. N6-succinyllysine; alternate is present on lysine 93. An N6-acetyllysine modification is found at lysine 128. The residue at position 138 (lysine 138) is an N6-acetyllysine; alternate. The residue at position 138 (lysine 138) is an N6-succinyllysine; alternate. Lysine 274 bears the N6-succinyllysine mark. N6-acetyllysine; alternate is present on lysine 286. Lysine 286 is subject to N6-succinyllysine; alternate. An N6-succinyllysine modification is found at lysine 333. The residue at position 458 (lysine 458) is an N6-acetyllysine; alternate. At lysine 458 the chain carries N6-succinyllysine; alternate. The saccharopine dehydrogenase stretch occupies residues 477-926 (MSTKKKVLVL…VFNTQSTIKL (450 aa)). Residues serine 488, aspartate 512, and glutamine 516 each contribute to the NAD(+) site. Residues lysine 523 and lysine 535 each carry the N6-acetyllysine; alternate modification. N6-succinyllysine; alternate occurs at positions 523 and 535. Residues leucine 554, alanine 576, and serine 577 each contribute to the NAD(+) site. 577–578 (SY) lines the L-saccharopine pocket. Residue lysine 584 is modified to N6-acetyllysine; alternate. N6-succinyllysine; alternate is present on lysine 584. 3 residues coordinate NAD(+): leucine 603, aspartate 604, and proline 605. Aspartate 604 is a binding site for L-saccharopine. L-saccharopine is bound at residue arginine 703. The residue at position 707 (lysine 707) is an N6-acetyllysine. Position 724–726 (724–726 (TLR)) interacts with L-saccharopine. The residue at position 732 (lysine 732) is an N6-succinyllysine. An N6-acetyllysine modification is found at lysine 739. At lysine 761 the chain carries N6-acetyllysine; alternate. Lysine 761 carries the N6-succinyllysine; alternate modification. N6-acetyllysine is present on residues lysine 778 and lysine 780.

It in the N-terminal section; belongs to the AlaDH/PNT family. This sequence in the C-terminal section; belongs to the saccharopine dehydrogenase family. Homotetramer.

Its subcellular location is the mitochondrion. The enzyme catalyses L-saccharopine + NADP(+) + H2O = L-lysine + 2-oxoglutarate + NADPH + H(+). It catalyses the reaction L-saccharopine + NAD(+) + H2O = (S)-2-amino-6-oxohexanoate + L-glutamate + NADH + H(+). It participates in amino-acid degradation; L-lysine degradation via saccharopine pathway; glutaryl-CoA from L-lysine: step 1/6. It functions in the pathway amino-acid degradation; L-lysine degradation via saccharopine pathway; glutaryl-CoA from L-lysine: step 2/6. Functionally, bifunctional enzyme that catalyzes the first two steps in lysine degradation. The protein is Alpha-aminoadipic semialdehyde synthase, mitochondrial of Rattus norvegicus (Rat).